A 179-amino-acid chain; its full sequence is Adenylyl-sulfate kinase (179 aa).

13-20 is a binding site for ATP; the sequence is GLSGAGKS. The active-site Phosphoserine intermediate is Ser87.

This sequence belongs to the APS kinase family.

It carries out the reaction adenosine 5'-phosphosulfate + ATP = 3'-phosphoadenylyl sulfate + ADP + H(+). It functions in the pathway sulfur metabolism; hydrogen sulfide biosynthesis; sulfite from sulfate: step 2/3. Catalyzes the synthesis of activated sulfate. The protein is Adenylyl-sulfate kinase of Paraburkholderia xenovorans (strain LB400).